A 140-amino-acid polypeptide reads, in one-letter code: Acyl-coenzyme A thioesterase 13 (140 aa).

The residue at position 1 (M1) is an N-acetylmethionine. Residue T2 is modified to N-acetylthreonine; in Acyl-coenzyme A thioesterase 13, N-terminally processed. An N6-acetyllysine mark is found at K27, K37, and K43. E46 contacts CoA. Positions 50 and 81 each coordinate substrate. Residues S83, 90-95 (YMSPAK), and 108-113 (KQGKTL) each bind CoA. 2 positions are modified to N6-acetyllysine: K108 and K127. H137 contributes to the CoA binding site.

This sequence belongs to the thioesterase PaaI family. In terms of assembly, homotetramer. Interacts with PCTP.

The protein resides in the cytoplasm. It localises to the cytosol. It is found in the mitochondrion. Its subcellular location is the nucleus. The protein localises to the cytoskeleton. The protein resides in the spindle. It carries out the reaction a fatty acyl-CoA + H2O = a fatty acid + CoA + H(+). It catalyses the reaction decanoyl-CoA + H2O = decanoate + CoA + H(+). The enzyme catalyses octanoyl-CoA + H2O = octanoate + CoA + H(+). The catalysed reaction is butanoyl-CoA + H2O = butanoate + CoA + H(+). It carries out the reaction hexanoyl-CoA + H2O = hexanoate + CoA + H(+). It catalyses the reaction tetradecanoyl-CoA + H2O = tetradecanoate + CoA + H(+). The enzyme catalyses hexadecanoyl-CoA + H2O = hexadecanoate + CoA + H(+). The catalysed reaction is dodecanoyl-CoA + H2O = dodecanoate + CoA + H(+). It carries out the reaction (9Z)-octadecenoyl-CoA + H2O = (9Z)-octadecenoate + CoA + H(+). It catalyses the reaction (5Z,8Z,11Z,14Z)-eicosatetraenoyl-CoA + H2O = (5Z,8Z,11Z,14Z)-eicosatetraenoate + CoA + H(+). Its function is as follows. Catalyzes the hydrolysis of acyl-CoAs into free fatty acids and coenzyme A (CoASH), regulating their respective intracellular levels. Has acyl-CoA thioesterase activity towards medium (C12) and long-chain (C18) fatty acyl-CoA substrates. Can also hydrolyze 3-hydroxyphenylacetyl-CoA and 3,4-dihydroxyphenylacetyl-CoA (in vitro). May play a role in controlling adaptive thermogenesis. In Homo sapiens (Human), this protein is Acyl-coenzyme A thioesterase 13.